Consider the following 295-residue polypeptide: MEFWGVEVKVGQTVTVDPMDPVDSYIHISQVALGEAKKDKPNEPVVLYLKVGEQKIVLGTLSRDGIPHLSLDLVLDSDSELSHTSKSASVFFCGYKVLTGNDNASDFSDSSEEDEELALEGQDNGKPELKAEGAKVTKPSKSIPKIGAPAKAADPKKDEDDDSDDESDDDLAGEDESGSSDEMDDDSNSEEESDGDDEETPAKKVDQGKKRPNESAAKTPISAKKAKTATPEKTDGKKSVHVATPHPSKKGGKTPNSTKGQTPNSAGQLSCASCKKSFTNEAGLQQHKKAKHGGQ.

Residues 105–271 are disordered; sequence SDFSDSSEED…TPNSAGQLSC (167 aa). Acidic residues predominate over residues 109-118; that stretch reads DSSEEDEELA. Basic and acidic residues predominate over residues 123-135; sequence DNGKPELKAEGAK. A compositionally biased stretch (acidic residues) spans 159-199; it reads EDDDSDDESDDDLAGEDESGSSDEMDDDSNSEEESDGDDEE. The segment covering 200–213 has biased composition (basic and acidic residues); that stretch reads TPAKKVDQGKKRPN. Positions 254–271 are enriched in polar residues; that stretch reads TPNSTKGQTPNSAGQLSC. Residues 269–292 form a C2H2-type zinc finger; that stretch reads LSCASCKKSFTNEAGLQQHKKAKH.

It belongs to the histone deacetylase HD2 family.

The protein localises to the nucleus. It is found in the nucleolus. In terms of biological role, mediates the deacetylation of lysine residues on the N-terminal part of the core histones (H2A, H2B, H3 and H4). Histone deacetylation gives a tag for epigenetic repression and plays an important role in transcriptional regulation, cell cycle progression and developmental events. The protein is Histone deacetylase HDT1 (HDT1) of Glycine max (Soybean).